The chain runs to 120 residues: MYAIVRDRGMQYRVEEGQTLRIALLDAEPGSAIELGEVLLIGGEMPLVGAPTVDGAKVLATVLGEEKGDKIVVFRYKNKKRYRRRTGHRQEYTRVSIDKIVVGANEQHVTNTPEGETNGA.

The protein belongs to the bacterial ribosomal protein bL21 family. In terms of assembly, part of the 50S ribosomal subunit. Contacts protein L20.

Functionally, this protein binds to 23S rRNA in the presence of protein L20. This chain is Large ribosomal subunit protein bL21, found in Roseiflexus castenholzii (strain DSM 13941 / HLO8).